The primary structure comprises 418 residues: E3 ubiquitin-protein ligase makorin-2 (418 aa).

2 C3H1-type zinc fingers span residues 2 to 29 (NTKH…HDLA) and 31 to 58 (SKPS…HVKP). Positions 76 to 100 (ESTPPLLPTQEAAAPVTKSAPQRRE) are disordered. The C3H1-type 3 zinc finger occupies 164–191 (DAPQQLCPFAQAGGCHYGESCPYIHGNV). Residues 192–221 (CEICGLQVLHPYDQEQRGHHEKLCMANFER) form a makorin-type Cys-His region. Residues 237–291 (CSICMERVYDKQSPSERRFGILSNCHHTYCLACIRQWRCARQFENPVIKSCPECR) form an RING-type zinc finger. A C3H1-type 4 zinc finger spans residues 320–349 (GMGKKACKYFDQGRGTCPFGGKCLYLHAYP).

It localises to the cytoplasm. It is found in the nucleus. The catalysed reaction is S-ubiquitinyl-[E2 ubiquitin-conjugating enzyme]-L-cysteine + [acceptor protein]-L-lysine = [E2 ubiquitin-conjugating enzyme]-L-cysteine + N(6)-ubiquitinyl-[acceptor protein]-L-lysine.. It functions in the pathway protein modification; protein ubiquitination. Its function is as follows. E3 ubiquitin ligase catalyzing the covalent attachment of ubiquitin moieties onto substrate proteins. Inhibits neurogenesis and axis formation during embryonic development by modulating the phosphatidylinositol 3-kinase (PI3K) pathway. Acts downstream of PI3K and akt1 to up-regulate gsk3b mRNA expression. The sequence is that of E3 ubiquitin-protein ligase makorin-2 (mkrn2) from Xenopus tropicalis (Western clawed frog).